A 1783-amino-acid chain; its full sequence is Chitin synthase A (1783 aa).

5 N-linked (GlcNAc...) asparagine glycosylation sites follow: Asn-159, Asn-637, Asn-652, Asn-664, and Asn-669. 2 helical membrane-spanning segments follow: residues 745–765 (IWVAIVWFWTFWIPSPLLSFV) and 781–801 (LTLVWFIVLINAAIVFWIVAF). N-linked (GlcNAc...) asparagine glycans are attached at residues Asn-1014 and Asn-1018. The helical transmembrane segment at 1051–1071 (IMLAMTIILCSVILVKFLAAL) threads the bilayer. N-linked (GlcNAc...) asparagine glycosylation occurs at Asn-1416. The next 3 helical transmembrane spans lie at 1441–1461 (FVVFIDLFGTIILPATTIYLG), 1474–1494 (FPIISIIMLAAVYGLQALIFI), and 1502–1522 (IGWMIIYIMAFPIYSFALPIY). Asn-1529 and Asn-1617 each carry an N-linked (GlcNAc...) asparagine glycan. The disordered stretch occupies residues 1659 to 1724 (THDINRGQTP…SFDFQRGNMQ (66 aa)). A compositionally biased stretch (polar residues) spans 1664–1688 (RGQTPFQDFPSSRPSVSNLRGQANP). A glycan (N-linked (GlcNAc...) asparagine) is linked at Asn-1695. The DEK-C domain occupies 1725–1781 (GPDDSMIIEAIQGVLREVDLDTVTKKQVRALVEQRLQTGLVGERRTFMDRQIDNELA).

This sequence belongs to the chitin synthase family. Class V subfamily.

The protein localises to the cell membrane. It carries out the reaction [(1-&gt;4)-N-acetyl-beta-D-glucosaminyl](n) + UDP-N-acetyl-alpha-D-glucosamine = [(1-&gt;4)-N-acetyl-beta-D-glucosaminyl](n+1) + UDP + H(+). Polymerizes chitin, a structural polymer of the cell wall and septum, by transferring the sugar moiety of UDP-GlcNAc to the non-reducing end of the growing chitin polymer. Responsible for about 29% of the chitin in conidial walls, is essential for conidial wall strength in media with high water potential and contributes to strength of hyphal tips. This is Chitin synthase A from Colletotrichum graminicola (Maize anthracnose fungus).